Reading from the N-terminus, the 436-residue chain is GTPase Der (436 aa).

EngA-type G domains lie at 4–167 (PTVA…PVEE) and 175–351 (IRFS…ESQN). Residues 10-17 (GRPNVGKS), 57-61 (DTGGI), 119-122 (NKVD), 181-188 (GRPNVGKS), 229-233 (DTAGM), and 294-297 (NKWD) each bind GTP. The 85-residue stretch at 352–436 (KRIPSAVLND…PIHLIARKRK (85 aa)) folds into the KH-like domain.

Belongs to the TRAFAC class TrmE-Era-EngA-EngB-Septin-like GTPase superfamily. EngA (Der) GTPase family. Associates with the 50S ribosomal subunit.

GTPase that plays an essential role in the late steps of ribosome biogenesis. The polypeptide is GTPase Der (Streptococcus pyogenes serotype M2 (strain MGAS10270)).